The sequence spans 177 residues: Large ribosomal subunit protein uL6 (177 aa).

It belongs to the universal ribosomal protein uL6 family. In terms of assembly, part of the 50S ribosomal subunit.

Its function is as follows. This protein binds to the 23S rRNA, and is important in its secondary structure. It is located near the subunit interface in the base of the L7/L12 stalk, and near the tRNA binding site of the peptidyltransferase center. The protein is Large ribosomal subunit protein uL6 of Shewanella frigidimarina (strain NCIMB 400).